Reading from the N-terminus, the 863-residue chain is MFRNNNNDNNNNDNGFDDENKGIFLDSKIEISDETSLIHKPYHDDYDENGLINNNNNSHNNNNGGNNNNHGPSKVTHRRGKHTFTEADKLKMTKFESLDFPIIDNQIYREYIRRTSKLNHMLKTFGKWIICFMIGVLVGITAYLVKQSVEFVNEFKFDQSGKYLEDERKFIAFLVYYSINILFGVSASLVIIPVGQIASGSGIPEVKGYLNGIRIPQSMNVKTLVGKLVSLILAYSSGLILGPEGPMIHIGSMLGGAIGQVKSKTLKWYPKVLWKYHNDRDRRDFISTGAAAGVAAAFGAPIGGVLFGFEEASSFWSRQLTWRTFFACLIATFTTNIILQGFDMQLHDYGVLKFGLSNKYLYKYSELIPFALIGVAGGLFGALFVNLNAHLSQWRSKFFANKKIYLRVLEVFILITITSTILYCCAAFTPCRSKTQANGSQTNSLDTSSSSILSSSGDNSKNSTKLFKLLNNASGEDKQEDKFIAFFCEQGEYNQMAGLSFNSLDAALRLLFSTSTDIFTIPTLAVFSLISFILTTITSGLMLASGLFIPMMLVGATFGRLVGQVIALFVSVDPCIYALVGASAMMAGFSRMTISLAIIMVELTEGTQYMLPVILSVMIAKWVGDFFNESIYEHLIEQKCYPFLQSQPPKSMIKLGVVDIMKTEVVTLHEVERVSKVIEVLKSEQHFHNGFPVIERPRPLDPNRKDAYGNLEYYEDETTYSGLILRNQLICLLYYRIFCHEQPLPQNPRLLGGNSNRRYNQRRFGRPTEYGYAPADPRMTYELMTQSLARHFPPIDKMNLKKEEIETMYIDLRPYMNLSTIVANETYSYSETYSIFRTIGLRHLPVVNKKNEVVGIVTRKDLL.

At M1–T124 the chain is on the cytoplasmic side. Positions E48–R78 are disordered. Residues N49–G71 are compositionally biased toward low complexity. Transmembrane regions (helical) follow at residues F125–V145, I171–I191, L228–I248, G289–F309, T324–M344, L367–L387, and V408–F428. Positions K434–S460 are disordered. The segment covering G439 to S460 has biased composition (low complexity). Transmembrane regions (helical) follow at residues I518–T538, S539–G559, and L561–G581. 2 consecutive CBS domains span residues M661 to Q742 and M816 to L863.

Belongs to the chloride channel (TC 2.A.49) family.

Its subcellular location is the membrane. Its function is as follows. Voltage-gated chloride channel. Chloride channels may have several functions including the regulation of cell volume, membrane potential stabilization and signal transduction. This is Chloride channel protein A (clcA) from Dictyostelium discoideum (Social amoeba).